Here is a 239-residue protein sequence, read N- to C-terminus: Ribonuclease 3 (239 aa).

Residues 12-137 (REKVEAVIGY…LIAAIYLDAG (126 aa)) enclose the RNase III domain. Residue Glu-50 coordinates Mg(2+). Asp-54 is a catalytic residue. Positions 123 and 126 each coordinate Mg(2+). Glu-126 is an active-site residue. The DRBM domain occupies 162–231 (DAKTELQEWA…ATRLLEREGV (70 aa)).

The protein belongs to the ribonuclease III family. As to quaternary structure, homodimer. It depends on Mg(2+) as a cofactor.

It localises to the cytoplasm. It catalyses the reaction Endonucleolytic cleavage to 5'-phosphomonoester.. Functionally, digests double-stranded RNA. Involved in the processing of primary rRNA transcript to yield the immediate precursors to the large and small rRNAs (23S and 16S). Processes some mRNAs, and tRNAs when they are encoded in the rRNA operon. Processes pre-crRNA and tracrRNA of type II CRISPR loci if present in the organism. The chain is Ribonuclease 3 from Allorhizobium ampelinum (strain ATCC BAA-846 / DSM 112012 / S4) (Agrobacterium vitis (strain S4)).